The chain runs to 140 residues: Protein SNA4 (140 aa).

Residues 1–8 (MCCYCVCC) lie on the Cytoplasmic side of the membrane. S-palmitoyl cysteine attachment occurs at residues cysteine 2, cysteine 3, cysteine 5, cysteine 7, and cysteine 8. A helical transmembrane segment spans residues 9–29 (TVSDFILYIVAFFFPPAAVLL). Residues 30-41 (RSGPCSSDFLLN) are Vacuolar-facing. The chain crosses the membrane as a helical span at residues 42–62 (VLLTLLGFLPGMLHAFYYITI). Residues 63 to 140 (TSPLRNAEYV…LVESPPPYVP (78 aa)) lie on the Cytoplasmic side of the membrane. The interval 84-140 (RNVPSNRPQNSQTPQNRPQQGSSARNVYPSVETPLLQGAAPHDNKQSLVESPPPYVP) is disordered. Over residues 85-108 (NVPSNRPQNSQTPQNRPQQGSSAR) the composition is skewed to polar residues. Residue lysine 128 forms a Glycyl lysine isopeptide (Lys-Gly) (interchain with G-Cter in ubiquitin) linkage. At serine 134 the chain carries Phosphoserine.

The protein belongs to the UPF0057 (PMP3) family.

It is found in the vacuole membrane. The sequence is that of Protein SNA4 (SNA4) from Saccharomyces cerevisiae (strain ATCC 204508 / S288c) (Baker's yeast).